The sequence spans 538 residues: CWF19-like protein 1 (538 aa).

Residues 298–324 form a disordered region; that stretch reads QGRKRSSTGRDSKSSPHPKQPRKPPQP.

This sequence belongs to the CWF19 family. In terms of tissue distribution, expressed in many brain regions, including cerebellum, thalamus and occipital, parietal and temporal lobes (at protein level). Also expressed in the spinal cord (at protein level).

The chain is CWF19-like protein 1 (CWF19L1) from Homo sapiens (Human).